Reading from the N-terminus, the 290-residue chain is Acetyl-coenzyme A carboxylase carboxyl transferase subunit beta (290 aa).

One can recognise a CoA carboxyltransferase N-terminal domain in the interval 27–290; the sequence is LWIKCPSCEA…LTRQPADAVA (264 aa). Residues cysteine 31, cysteine 34, cysteine 50, and cysteine 53 each coordinate Zn(2+). Residues 31–53 form a C4-type zinc finger; that stretch reads CPSCEAVLYRNDVEANLHVCPKC.

This sequence belongs to the AccD/PCCB family. Acetyl-CoA carboxylase is a heterohexamer composed of biotin carboxyl carrier protein (AccB), biotin carboxylase (AccC) and two subunits each of ACCase subunit alpha (AccA) and ACCase subunit beta (AccD). The cofactor is Zn(2+).

It is found in the cytoplasm. It catalyses the reaction N(6)-carboxybiotinyl-L-lysyl-[protein] + acetyl-CoA = N(6)-biotinyl-L-lysyl-[protein] + malonyl-CoA. The protein operates within lipid metabolism; malonyl-CoA biosynthesis; malonyl-CoA from acetyl-CoA: step 1/1. Its function is as follows. Component of the acetyl coenzyme A carboxylase (ACC) complex. Biotin carboxylase (BC) catalyzes the carboxylation of biotin on its carrier protein (BCCP) and then the CO(2) group is transferred by the transcarboxylase to acetyl-CoA to form malonyl-CoA. The sequence is that of Acetyl-coenzyme A carboxylase carboxyl transferase subunit beta from Paraburkholderia phymatum (strain DSM 17167 / CIP 108236 / LMG 21445 / STM815) (Burkholderia phymatum).